The following is a 217-amino-acid chain: Small ribosomal subunit protein uS3 (217 aa).

The region spanning 38-106 is the KH type-2 domain; that stretch reads IRKFIQKELA…QVHINIVEIK (69 aa).

It belongs to the universal ribosomal protein uS3 family. As to quaternary structure, part of the 30S ribosomal subunit. Forms a tight complex with proteins S10 and S14.

Its function is as follows. Binds the lower part of the 30S subunit head. Binds mRNA in the 70S ribosome, positioning it for translation. This Streptococcus thermophilus (strain CNRZ 1066) protein is Small ribosomal subunit protein uS3.